Here is a 132-residue protein sequence, read N- to C-terminus: MANQHANHSINDFKQFVKKHPKLIKEVRKEQRSWQDVYENWVLFGESDPIWDPYREPEEASEAVPETPQKNDFVSKMVTAVKKMDVNQMNEQINKMSQSISSLQSLLNTFSGSGQKHSQPGSGQHPFSFRKD.

The interval 107-132 is disordered; sequence LNTFSGSGQKHSQPGSGQHPFSFRKD. The span at 108–122 shows a compositional bias: polar residues; sequence NTFSGSGQKHSQPGS.

This is an uncharacterized protein from Bacillus subtilis (strain 168).